Here is a 215-residue protein sequence, read N- to C-terminus: 3-isopropylmalate dehydratase small subunit (215 aa).

It belongs to the LeuD family. LeuD type 1 subfamily. Heterodimer of LeuC and LeuD.

The catalysed reaction is (2R,3S)-3-isopropylmalate = (2S)-2-isopropylmalate. It functions in the pathway amino-acid biosynthesis; L-leucine biosynthesis; L-leucine from 3-methyl-2-oxobutanoate: step 2/4. In terms of biological role, catalyzes the isomerization between 2-isopropylmalate and 3-isopropylmalate, via the formation of 2-isopropylmaleate. The chain is 3-isopropylmalate dehydratase small subunit from Saccharophagus degradans (strain 2-40 / ATCC 43961 / DSM 17024).